A 121-amino-acid polypeptide reads, in one-letter code: Small ribosomal subunit protein uS13 (121 aa).

Residues 94-121 are disordered; it reads GLPVRGQRTRTNSRTRKGPKKGAAALKK.

It belongs to the universal ribosomal protein uS13 family. Part of the 30S ribosomal subunit. Forms a loose heterodimer with protein S19. Forms two bridges to the 50S subunit in the 70S ribosome.

Its function is as follows. Located at the top of the head of the 30S subunit, it contacts several helices of the 16S rRNA. In the 70S ribosome it contacts the 23S rRNA (bridge B1a) and protein L5 of the 50S subunit (bridge B1b), connecting the 2 subunits; these bridges are implicated in subunit movement. Contacts the tRNAs in the A and P-sites. This is Small ribosomal subunit protein uS13 from Leptothrix cholodnii (strain ATCC 51168 / LMG 8142 / SP-6) (Leptothrix discophora (strain SP-6)).